A 1039-amino-acid chain; its full sequence is Multidrug resistance protein MdtB (1039 aa).

11 helical membrane passes run 15–37 (LFIM…GIIG), 345–362 (FELM…YLFL), 367–389 (ATII…MVFL), 396–418 (LTLM…VIEN), 438–460 (GEIG…PLLF), 472–494 (FAIT…TPMM), 535–557 (HPWL…WVFI), 866–888 (VWLI…ESFI), 908–930 (LMIA…IGIV), 967–989 (ILMT…GVGA), and 999–1021 (MVGG…YLLF).

The protein belongs to the resistance-nodulation-cell division (RND) (TC 2.A.6) family. MdtB subfamily. In terms of assembly, part of a tripartite efflux system composed of MdtA, MdtB and MdtC. MdtB forms a heteromultimer with MdtC.

Its subcellular location is the cell inner membrane. The polypeptide is Multidrug resistance protein MdtB (Shigella flexneri).